Consider the following 407-residue polypeptide: Imidazolonepropionase (407 aa).

Positions 68 and 70 each coordinate Fe(3+). Residues His68 and His70 each contribute to the Zn(2+) site. 4-imidazolone-5-propanoate is bound by residues Arg77, Tyr140, and His173. Tyr140 serves as a coordination point for N-formimidoyl-L-glutamate. Fe(3+) is bound at residue His238. Zn(2+) is bound at residue His238. Gln241 provides a ligand contact to 4-imidazolone-5-propanoate. Asp313 is a Fe(3+) binding site. Residue Asp313 coordinates Zn(2+). Positions 315 and 317 each coordinate N-formimidoyl-L-glutamate. Thr318 is a binding site for 4-imidazolone-5-propanoate.

The protein belongs to the metallo-dependent hydrolases superfamily. HutI family. Requires Zn(2+) as cofactor. Fe(3+) is required as a cofactor.

The protein resides in the cytoplasm. It carries out the reaction 4-imidazolone-5-propanoate + H2O = N-formimidoyl-L-glutamate. Its pathway is amino-acid degradation; L-histidine degradation into L-glutamate; N-formimidoyl-L-glutamate from L-histidine: step 3/3. Its function is as follows. Catalyzes the hydrolytic cleavage of the carbon-nitrogen bond in imidazolone-5-propanoate to yield N-formimidoyl-L-glutamate. It is the third step in the universal histidine degradation pathway. In Burkholderia pseudomallei (strain 1710b), this protein is Imidazolonepropionase.